The sequence spans 478 residues: Cytochrome c-552 (478 aa).

A signal peptide spans 1–26 (MARKTLRARRFFSLIFPFFFITSVYA). Histidine 94 is a binding site for heme c. Heme contacts are provided by cysteine 122, cysteine 125, and lysine 126. Heme c-binding residues include cysteine 160, cysteine 163, histidine 164, cysteine 209, cysteine 212, and histidine 213. 4 residues coordinate Ca(2+): glutamate 215, tyrosine 216, lysine 261, and glutamine 263. Tyrosine 216 serves as a coordination point for substrate. Position 264 (histidine 264) interacts with substrate. Histidine 275, cysteine 282, cysteine 285, histidine 286, histidine 301, cysteine 314, cysteine 317, histidine 318, and histidine 393 together coordinate heme c.

This sequence belongs to the cytochrome c-552 family. Ca(2+) is required as a cofactor. It depends on heme c as a cofactor.

It localises to the periplasm. The catalysed reaction is 6 Fe(III)-[cytochrome c] + NH4(+) + 2 H2O = 6 Fe(II)-[cytochrome c] + nitrite + 8 H(+). The protein operates within nitrogen metabolism; nitrate reduction (assimilation). In terms of biological role, catalyzes the reduction of nitrite to ammonia, consuming six electrons in the process. In Salmonella schwarzengrund (strain CVM19633), this protein is Cytochrome c-552.